The primary structure comprises 569 residues: Acetate/butyrate--CoA ligase AAE7, peroxisomal (569 aa).

Residues 567 to 569 carry the Microbody targeting signal motif; that stretch reads SRL.

The protein belongs to the ATP-dependent AMP-binding enzyme family. As to expression, expressed in roots, leaves, stems, flowers and developing seeds.

The protein localises to the peroxisome. The enzyme catalyses acetate + ATP + CoA = acetyl-CoA + AMP + diphosphate. It carries out the reaction a medium-chain fatty acid + ATP + CoA = a medium-chain fatty acyl-CoA + AMP + diphosphate. In terms of biological role, peroxisomal acetate/butyrate--CoA ligase that is probably involved in the activation of exogenous acetate for entry into the glyoxylate cycle. May play a role to prevent carbon loss from peroxisomes during lipid mobilization. In vitro, is active with both acetate and butyrate. The polypeptide is Acetate/butyrate--CoA ligase AAE7, peroxisomal (AAE7) (Arabidopsis thaliana (Mouse-ear cress)).